A 287-amino-acid polypeptide reads, in one-letter code: Small ribosomal subunit protein uS2 (287 aa).

Over residues Leu254–Ala277 the composition is skewed to low complexity. Positions Leu254–Ser287 are disordered.

It belongs to the universal ribosomal protein uS2 family.

This Mycobacterium tuberculosis (strain CDC 1551 / Oshkosh) protein is Small ribosomal subunit protein uS2 (rpsB).